A 721-amino-acid chain; its full sequence is Glycine--tRNA ligase beta subunit (721 aa).

It belongs to the class-II aminoacyl-tRNA synthetase family. In terms of assembly, tetramer of two alpha and two beta subunits.

Its subcellular location is the cytoplasm. The catalysed reaction is tRNA(Gly) + glycine + ATP = glycyl-tRNA(Gly) + AMP + diphosphate. The sequence is that of Glycine--tRNA ligase beta subunit from Sinorhizobium medicae (strain WSM419) (Ensifer medicae).